The following is a 329-amino-acid chain: Putative glucose ABC transporter permease protein TsgC13 (329 aa).

7 helical membrane passes run 3–23, 32–52, 60–80, 89–109, 139–161, 193–213, and 216–236; these read FAAG…LAGL, GVLN…GFVV, WLGF…HAFL, VISG…FGSG, AFFR…WFFL, LAVI…SLAF, and LWVP…VVFA.

Belongs to the binding-protein-dependent transport system permease family. The complex is composed of two ATP-binding proteins (TsgD13), two transmembrane proteins (TsgB13 and TsgC13) and a solute-binding protein (TsgA13).

It localises to the cell membrane. Functionally, part of an ABC transporter complex involved in glucose import (Potential). Responsible for the translocation of the substrate across the membrane. This Haloferax volcanii (strain ATCC 29605 / DSM 3757 / JCM 8879 / NBRC 14742 / NCIMB 2012 / VKM B-1768 / DS2) (Halobacterium volcanii) protein is Putative glucose ABC transporter permease protein TsgC13 (tsgC13).